We begin with the raw amino-acid sequence, 293 residues long: 4-hydroxy-tetrahydrodipicolinate synthase (293 aa).

Position 45 (Thr45) interacts with pyruvate. Tyr133 serves as the catalytic Proton donor/acceptor. Lys161 acts as the Schiff-base intermediate with substrate in catalysis. Ile203 contacts pyruvate.

This sequence belongs to the DapA family. In terms of assembly, homotetramer; dimer of dimers.

It is found in the cytoplasm. It carries out the reaction L-aspartate 4-semialdehyde + pyruvate = (2S,4S)-4-hydroxy-2,3,4,5-tetrahydrodipicolinate + H2O + H(+). The protein operates within amino-acid biosynthesis; L-lysine biosynthesis via DAP pathway; (S)-tetrahydrodipicolinate from L-aspartate: step 3/4. Functionally, catalyzes the condensation of (S)-aspartate-beta-semialdehyde [(S)-ASA] and pyruvate to 4-hydroxy-tetrahydrodipicolinate (HTPA). This Aliivibrio salmonicida (strain LFI1238) (Vibrio salmonicida (strain LFI1238)) protein is 4-hydroxy-tetrahydrodipicolinate synthase.